A 397-amino-acid polypeptide reads, in one-letter code: Acetate kinase 2 (397 aa).

Position 10 (N10) interacts with Mg(2+). K17 is a binding site for ATP. R90 provides a ligand contact to substrate. D147 acts as the Proton donor/acceptor in catalysis. ATP contacts are provided by residues 207 to 211 (HLGNG), 281 to 283 (DAR), and 329 to 333 (GIGEN). E385 contacts Mg(2+).

This sequence belongs to the acetokinase family. In terms of assembly, homodimer. Mg(2+) serves as cofactor. Mn(2+) is required as a cofactor.

The protein localises to the cytoplasm. It catalyses the reaction acetate + ATP = acetyl phosphate + ADP. The protein operates within metabolic intermediate biosynthesis; acetyl-CoA biosynthesis; acetyl-CoA from acetate: step 1/2. In terms of biological role, catalyzes the formation of acetyl phosphate from acetate and ATP. Can also catalyze the reverse reaction. The polypeptide is Acetate kinase 2 (Aliivibrio fischeri (strain ATCC 700601 / ES114) (Vibrio fischeri)).